The chain runs to 228 residues: Urease accessory protein UreF 1 (228 aa).

This sequence belongs to the UreF family. As to quaternary structure, ureD, UreF and UreG form a complex that acts as a GTP-hydrolysis-dependent molecular chaperone, activating the urease apoprotein by helping to assemble the nickel containing metallocenter of UreC. The UreE protein probably delivers the nickel.

The protein localises to the cytoplasm. Its function is as follows. Required for maturation of urease via the functional incorporation of the urease nickel metallocenter. In terms of biological role, disruption of the ure1 gene cluster suggests that it protects brucellae during their passage through the stomach. The major route of infection in human brucellosis is oral. The protein is Urease accessory protein UreF 1 of Brucella abortus (strain 2308).